Consider the following 504-residue polypeptide: Peroxisomal N(1)-acetyl-spermine/spermidine oxidase (504 aa).

Residues Ala-16, Glu-37, Arg-45, and 61–62 (HW) each bind FAD. Positions 64 and 187 each coordinate substrate. Residue Val-240 participates in FAD binding. Asn-313 is a substrate binding site. Residues Glu-465 and 474 to 475 (TT) contribute to the FAD site. A Microbody targeting signal motif is present at residues 502–504 (PRL).

It belongs to the flavin monoamine oxidase family. In terms of assembly, monomer. Requires FAD as cofactor. As to expression, widely expressed at different developmental stages. Expressed at high level in the liver and the stomach, expressed at lower level in heart, spleen, thymus, small intestine, muscle, pancreas, uterus, and breast and expressed at very low level in brain, kidney, lung, testis, skin, adrenal gland and prostate gland.

The protein localises to the peroxisome. It is found in the cytoplasm. It carries out the reaction N(1)-acetylspermine + O2 + H2O = 3-acetamidopropanal + spermidine + H2O2. The enzyme catalyses N(1)-acetylspermidine + O2 + H2O = 3-acetamidopropanal + putrescine + H2O2. The catalysed reaction is N(1),N(12)-diacetylspermine + O2 + H2O = 3-acetamidopropanal + N(1)-acetylspermidine + H2O2. Its pathway is amine and polyamine metabolism; spermine metabolism. Functionally, flavoenzyme which catalyzes the oxidation of N(1)-acetylspermine to spermidine and is thus involved in the polyamine back-conversion. Can also oxidize N(1)-acetylspermidine to putrescine. Substrate specificity: N(1)-acetylspermine = N(1)-acetylspermidine &gt; N(1),N(12)-diacylspermine &gt;&gt; spermine. Does not oxidize spermidine. Plays an important role in the regulation of polyamine intracellular concentration and has the potential to act as a determinant of cellular sensitivity to the antitumor polyamine analogs. In Mus musculus (Mouse), this protein is Peroxisomal N(1)-acetyl-spermine/spermidine oxidase (Paox).